Reading from the N-terminus, the 643-residue chain is NAD-dependent malic enzyme, mitochondrial (643 aa).

The N-terminal 38 residues, 1–38 (PRVRSFIAHQSGITSVIRRSPDIAHRMVRSLSVSSQRN), are a transit peptide targeting the mitochondrion. Residues Gln-116, Arg-119, and Arg-143 each coordinate fumarate. Tyr-164 acts as the Proton donor in catalysis. Arg-219 serves as a coordination point for (S)-malate. Arg-219 contributes to the NAD(+) binding site. Lys-237 functions as the Proton acceptor in the catalytic mechanism. Positions 309 and 310 each coordinate a divalent metal cation. Asn-313, Asp-333, Ala-366, Ala-369, and Asn-472 together coordinate NAD(+). Asp-333 provides a ligand contact to a divalent metal cation. Residues Asn-472 and Asn-516 each coordinate (S)-malate.

Belongs to the malic enzymes family. In terms of assembly, homotetramer. The cofactor is Mg(2+). Requires Mn(2+) as cofactor.

Its subcellular location is the mitochondrion matrix. The enzyme catalyses (S)-malate + NAD(+) = pyruvate + CO2 + NADH. The catalysed reaction is oxaloacetate + H(+) = pyruvate + CO2. With respect to regulation, subject to allosteric activation by fumarate. Functionally, NAD-dependent mitochondrial malic enzyme that catalyzes the oxidative decarboxylation of malate to pyruvate. This chain is NAD-dependent malic enzyme, mitochondrial, found in Ascaris suum (Pig roundworm).